Here is a 332-residue protein sequence, read N- to C-terminus: DNA-directed RNA polymerase subunit alpha (332 aa).

The interval 1–234 (MIEYVIPKKL…NHLQIITDSL (234 aa)) is alpha N-terminal domain (alpha-NTD). Residues 264–332 (AVYSKKIDEL…KFGLSLKKGG (69 aa)) form an alpha C-terminal domain (alpha-CTD) region.

The protein belongs to the RNA polymerase alpha chain family. Homodimer. The RNAP catalytic core consists of 2 alpha, 1 beta, 1 beta' and 1 omega subunit. When a sigma factor is associated with the core the holoenzyme is formed, which can initiate transcription.

The enzyme catalyses RNA(n) + a ribonucleoside 5'-triphosphate = RNA(n+1) + diphosphate. DNA-dependent RNA polymerase catalyzes the transcription of DNA into RNA using the four ribonucleoside triphosphates as substrates. The sequence is that of DNA-directed RNA polymerase subunit alpha from Pseudothermotoga lettingae (strain ATCC BAA-301 / DSM 14385 / NBRC 107922 / TMO) (Thermotoga lettingae).